Reading from the N-terminus, the 125-residue chain is Ribonuclease P protein component (125 aa).

Belongs to the RnpA family. Consists of a catalytic RNA component (M1 or rnpB) and a protein subunit.

The enzyme catalyses Endonucleolytic cleavage of RNA, removing 5'-extranucleotides from tRNA precursor.. In terms of biological role, RNaseP catalyzes the removal of the 5'-leader sequence from pre-tRNA to produce the mature 5'-terminus. It can also cleave other RNA substrates such as 4.5S RNA. The protein component plays an auxiliary but essential role in vivo by binding to the 5'-leader sequence and broadening the substrate specificity of the ribozyme. The sequence is that of Ribonuclease P protein component from Clostridium beijerinckii (strain ATCC 51743 / NCIMB 8052) (Clostridium acetobutylicum).